A 132-amino-acid chain; its full sequence is Small ribosomal subunit protein uS8 (132 aa).

It belongs to the universal ribosomal protein uS8 family. In terms of assembly, part of the 30S ribosomal subunit. Contacts proteins S5 and S12.

In terms of biological role, one of the primary rRNA binding proteins, it binds directly to 16S rRNA central domain where it helps coordinate assembly of the platform of the 30S subunit. This chain is Small ribosomal subunit protein uS8, found in Rubrobacter xylanophilus (strain DSM 9941 / JCM 11954 / NBRC 16129 / PRD-1).